Here is a 346-residue protein sequence, read N- to C-terminus: MATILSIETSCDETAVAIVKNRNIYSNIVASQIDLHQTYGGVVPEVASRQHLETINPCLEQAFIEANLNWSDIDGIAATVAPGLIGALMVGVSAAKTLSILYQKPFIGVHHLEGHIYASYLSEPDLQPPFLCLLVSGGHTSLIYVKDCGIYEMLGSTRDDAAGEAFDKVARLLQLSYPGGPIIDRMAQTGNPHAFSLPEGRVSLPEGGYHPYDSSFSGLKTAVLRLVQKLEQDHLSLPVHDLAASFQETVARSLTKKTITCALDYNLTTIAVGGGVGANSALRKHLTSAATEHNLKVFFPPLKLCTDNAAMIGCAAADHFNRGHFSPLSIGVQSRLPITEVMKLYQ.

2 residues coordinate Fe cation: His-111 and His-115. Substrate is bound by residues 134 to 138, Asp-167, Gly-180, Asp-184, and Asn-279; that span reads LVSGG. Asp-307 contributes to the Fe cation binding site.

The protein belongs to the KAE1 / TsaD family. The cofactor is Fe(2+).

It is found in the cytoplasm. The enzyme catalyses L-threonylcarbamoyladenylate + adenosine(37) in tRNA = N(6)-L-threonylcarbamoyladenosine(37) in tRNA + AMP + H(+). Its function is as follows. Required for the formation of a threonylcarbamoyl group on adenosine at position 37 (t(6)A37) in tRNAs that read codons beginning with adenine. Is involved in the transfer of the threonylcarbamoyl moiety of threonylcarbamoyl-AMP (TC-AMP) to the N6 group of A37, together with TsaE and TsaB. TsaD likely plays a direct catalytic role in this reaction. This is tRNA N6-adenosine threonylcarbamoyltransferase from Gloeothece citriformis (strain PCC 7424) (Cyanothece sp. (strain PCC 7424)).